We begin with the raw amino-acid sequence, 274 residues long: Acetyl-coenzyme A carboxylase carboxyl transferase subunit alpha (274 aa).

The 249-residue stretch at 2–250 (NKEFIKSIVV…KKEIMNAMNE (249 aa)) folds into the CoA carboxyltransferase C-terminal domain.

This sequence belongs to the AccA family. Acetyl-CoA carboxylase is a heterohexamer composed of biotin carboxyl carrier protein (AccB), biotin carboxylase (AccC) and two subunits each of ACCase subunit alpha (AccA) and ACCase subunit beta (AccD).

Its subcellular location is the cytoplasm. The catalysed reaction is N(6)-carboxybiotinyl-L-lysyl-[protein] + acetyl-CoA = N(6)-biotinyl-L-lysyl-[protein] + malonyl-CoA. It participates in lipid metabolism; malonyl-CoA biosynthesis; malonyl-CoA from acetyl-CoA: step 1/1. Functionally, component of the acetyl coenzyme A carboxylase (ACC) complex. First, biotin carboxylase catalyzes the carboxylation of biotin on its carrier protein (BCCP) and then the CO(2) group is transferred by the carboxyltransferase to acetyl-CoA to form malonyl-CoA. This is Acetyl-coenzyme A carboxylase carboxyl transferase subunit alpha from Clostridium botulinum (strain Alaska E43 / Type E3).